Consider the following 357-residue polypeptide: Non-structural protein NS2 (357 aa).

Disordered regions lie at residues 169–191 (PRLQ…DEAK) and 229–266 (DERD…HPKT). The segment covering 233–249 (EGDRDERGDEEQVKTLS) has biased composition (basic and acidic residues). The segment covering 250–260 (DDDDQGEDASD) has biased composition (acidic residues).

Belongs to the orbivirus non-structural protein NS2 family.

Its function is as follows. Single-stranded RNA-binding protein. This Antilocapra americana (Pronghorn) protein is Non-structural protein NS2 (Segment-8).